The following is an 85-amino-acid chain: Toxin TdNa9 (85 aa).

The N-terminal stretch at 1–21 (MLKFAIAVALLLFIGLELREA) is a signal peptide. The 63-residue stretch at 22–84 (RDGYPQSKVN…YGDPGTKPCM (63 aa)) folds into the LCN-type CS-alpha/beta domain. 4 cysteine pairs are disulfide-bonded: Cys33–Cys83, Cys37–Cys58, Cys43–Cys63, and Cys47–Cys65.

Belongs to the long (4 C-C) scorpion toxin superfamily. Sodium channel inhibitor family. Beta subfamily. As to expression, expressed by the venom gland.

The protein resides in the secreted. Alpha toxins bind voltage-independently at site-3 of sodium channels (Nav) and inhibit the inactivation of the activated channels, thereby blocking neuronal transmission. This toxin binds, in vitro, to sodium channels and inhibits the inactivation of the activated channels. Seems not toxic to mice, crickets and sweet-water shrimps. The sequence is that of Toxin TdNa9 from Tityus discrepans (Venezuelan scorpion).